A 122-amino-acid polypeptide reads, in one-letter code: Large ribosomal subunit protein uL14 (122 aa).

It belongs to the universal ribosomal protein uL14 family. As to quaternary structure, part of the 50S ribosomal subunit. Forms a cluster with proteins L3 and L19. In the 70S ribosome, L14 and L19 interact and together make contacts with the 16S rRNA in bridges B5 and B8.

Binds to 23S rRNA. Forms part of two intersubunit bridges in the 70S ribosome. The chain is Large ribosomal subunit protein uL14 from Pseudoalteromonas translucida (strain TAC 125).